The chain runs to 467 residues: 3-isopropylmalate dehydratase large subunit (467 aa).

Positions 347, 407, and 410 each coordinate [4Fe-4S] cluster.

The protein belongs to the aconitase/IPM isomerase family. LeuC type 1 subfamily. As to quaternary structure, heterodimer of LeuC and LeuD. [4Fe-4S] cluster is required as a cofactor.

It catalyses the reaction (2R,3S)-3-isopropylmalate = (2S)-2-isopropylmalate. It functions in the pathway amino-acid biosynthesis; L-leucine biosynthesis; L-leucine from 3-methyl-2-oxobutanoate: step 2/4. In terms of biological role, catalyzes the isomerization between 2-isopropylmalate and 3-isopropylmalate, via the formation of 2-isopropylmaleate. This chain is 3-isopropylmalate dehydratase large subunit, found in Gloeothece citriformis (strain PCC 7424) (Cyanothece sp. (strain PCC 7424)).